Consider the following 469-residue polypeptide: GDP-fucose protein O-fucosyltransferase 2 (469 aa).

The signal sequence occupies residues 1-18 (MKFIIVLLLFFFFKVIDR). GDP-beta-L-fucose is bound by residues 56–60 (GEGFN), 277–279 (HLR), and 373–374 (RF). Glu-57 acts as the Proton acceptor in catalysis.

It belongs to the glycosyltransferase 68 family.

It is found in the endoplasmic reticulum. It catalyses the reaction L-seryl-[protein] + GDP-beta-L-fucose = 3-O-(alpha-L-fucosyl)-L-seryl-[protein] + GDP + H(+). The catalysed reaction is L-threonyl-[protein] + GDP-beta-L-fucose = 3-O-(alpha-L-fucosyl)-L-threonyl-[protein] + GDP + H(+). It participates in protein modification; protein glycosylation. Its function is as follows. Catalyzes the reaction that attaches fucose through an O-glycosidic linkage to a conserved serine or threonine residue in the consensus sequence C1-X-X-S/T-C2 of thrombospondin type I repeats (TSRs) where C1 and C2 are the first and second cysteines of the repeat, respectively. O-fucosylates sporozoite proteins CSP and TRAP. O-fucosylation regulates stability and intracellular trafficking of TRAP but not of CSP. Probably by regulating protein O-fucosylation, may play a role in parasite transmission to the mosquito vector and/or infection of the vertebrate host hepatocytes; however, POFUT2 involvement in transmission/infection is controversial. This Plasmodium falciparum (isolate NF54) protein is GDP-fucose protein O-fucosyltransferase 2.